The chain runs to 355 residues: UDP-N-acetylglucosamine--N-acetylmuramyl-(pentapeptide) pyrophosphoryl-undecaprenol N-acetylglucosamine transferase (355 aa).

Residues 14–16 (TGG), Asn-126, Arg-162, Ser-190, Ile-243, 262–267 (ALTVSE), and Gln-287 contribute to the UDP-N-acetyl-alpha-D-glucosamine site.

This sequence belongs to the glycosyltransferase 28 family. MurG subfamily.

The protein resides in the cell inner membrane. It carries out the reaction di-trans,octa-cis-undecaprenyl diphospho-N-acetyl-alpha-D-muramoyl-L-alanyl-D-glutamyl-meso-2,6-diaminopimeloyl-D-alanyl-D-alanine + UDP-N-acetyl-alpha-D-glucosamine = di-trans,octa-cis-undecaprenyl diphospho-[N-acetyl-alpha-D-glucosaminyl-(1-&gt;4)]-N-acetyl-alpha-D-muramoyl-L-alanyl-D-glutamyl-meso-2,6-diaminopimeloyl-D-alanyl-D-alanine + UDP + H(+). Its pathway is cell wall biogenesis; peptidoglycan biosynthesis. Cell wall formation. Catalyzes the transfer of a GlcNAc subunit on undecaprenyl-pyrophosphoryl-MurNAc-pentapeptide (lipid intermediate I) to form undecaprenyl-pyrophosphoryl-MurNAc-(pentapeptide)GlcNAc (lipid intermediate II). The polypeptide is UDP-N-acetylglucosamine--N-acetylmuramyl-(pentapeptide) pyrophosphoryl-undecaprenol N-acetylglucosamine transferase (Vibrio vulnificus (strain YJ016)).